A 626-amino-acid polypeptide reads, in one-letter code: Trehalase (626 aa).

2 helical membrane passes run 20–40 (KLFL…FIYL) and 45–65 (SLFF…MLDS). Residues arginine 224, aspartate 232, asparagine 268, arginine 277, glutamine 279, arginine 344, and glutamate 346 each coordinate alpha,alpha-trehalose. Catalysis depends on proton donor/acceptor residues aspartate 380 and glutamate 580. The alpha,alpha-trehalose site is built by glutamate 580 and glutamate 595.

It belongs to the glycosyl hydrolase 37 family. As to quaternary structure, forms homodimers. As to expression, highly expressed in flowers. Expressed at low levels in leaves and stems. Expressed in guard cells.

Its subcellular location is the cell membrane. The protein resides in the cytoplasm. It is found in the nucleus. The enzyme catalyses alpha,alpha-trehalose + H2O = alpha-D-glucose + beta-D-glucose. Involved in the regulation of trehalose content by hydrolyzing trehalose to glucose. May play a role in the regulation of abscisic acid-induced stomatal closure in response to drought stress. In Arabidopsis thaliana (Mouse-ear cress), this protein is Trehalase (TRE1).